We begin with the raw amino-acid sequence, 3931 residues long: MSGILDRCTCTPNARVFVAEGQVYCTRCLSARSLLPLNLQVPELGVLGLFYRPEEPLRWTLPRAFPTVECSPAGACWLSAIFPIARMTSGNLNFQQRMVRVAAEIYRAGQLTPTVLKTLQVYERGCRWYPIVGPVPGVGVYANSLHVSDKPFPGATHVLTNLPLPQRPKPEDFCPFECAMADVYDIGRGAVMYVAGGKVSWAPRGGNEVKFEPIPKELKLVANRLHTSFPPHHVVDMSRFTFMTPGSGVSMRVEYQHGCLPADTVPEGNCWWRLFDSLPPEVQYKEIRHANQFGYQTKHGVPGKYLQRRLQVNGLRAVTDTHGPIVIQYFSVKESWIRHLKLVEEPSLPGFEDLLRIRVEPNTSPLAGKDEKIFRFGSHKWYGAGKRARKPRSGATTMVAHHASSAHETRQATKHEGAGANKAEHLKRYSPPAEGNCGWHCISAIANRMVNSNFETTLPERVRPSDDWATDEDLVNTIQILRLPAALDRNGACGSAKYVLKLEGEHWTVSVIPGMSPTLLPLECVQGCCEHKGGLVSPDAVEISGFDPACLDRLAKVMHLPSSTIPAALAELSDDSNRPVSPAATTWTVSQFYARHRGGDHHDQVCLGKIISLCQVIEDCCCHQNKTNRATPEEVAAKIDQYLRGATSLEECLAKLERVSPPSAADTSFDWNVVLPGVEAANQTTEQPHVNSCCTLVPPVTQEPLGKDSVPLTAFSLSNCYYPAQGDEVHHRERLNSVLSKLEEVVLEEYGLMSTGLGPRPVLPSGLDELKDQMEEDLLKLANTQATSEMMAWAAEQVDLKAWVKSYPRWTPPPPPPRVQPRRTKSVKSLPEGKPVPAPRRKVRSDCGSPVLMGDNVPNGSEETVGGPLNFPTPSEPMTPMSEPVLVPASRRVPKLMTPLSGSAPVPAPRRTVTTTLTHQDEPLDLSASSQTEYEAFPLAPSQNMGILEAGGQEVEEVLSEISDILNDTNPAPVSSSSSLSSVKITRPKYSAQAIIDSGGPCSGHLQKEKEACLSIMREACDASKLGDPATQEWLSRMWDRVDMLTWRNTSAYQAFRILNGRFEFLPKMILETPPPHPCGFVMLPRTPAPSVSAESDLTIGSVATEDVPRILGKIGDTDELLDRGPSAPSKGEPVCDQPAKDPRMSPRESDESMIAPPADTGGVGSFTDLPSSDGVDVDGGGPLRTVKTKAGRLLDQLSCQVFSLVSHLPIFFSHLFKSDSGYSPGDWGFAAFTLFCLFLCYSYPFFGFAPLLGVFSGSSRRVRMGVFGCWLAFAVGLFKPVSDPVGTACEFDSPECRNVLHSFELLKPWDPVRSLVVGPVGLGLAILGRLLGGARYIWHFLLRLGIVADCILAGAYVLSQGRCKKCWGSCVRTAPNEIAFNVFPFTRATRSSLIDLCDRFCAPKGMDPIFLATGWRGCWTGRSPIEQPSEKPIAFAQLDEKRITARTVVAQPYDPNQAVKCLRVLQAGGAMVAEAVPKVVKVSAIPFRAPFFPAGVKVDPECRIVVDPDTFTTALRSGYSTANLVLGTGDFAQLNGLKIRQISKPSGGGPHLIAALHVACSMALHMLAGVYVTAVGSCGTGTNDPWCTNPFAVPGYGPGSLCTSRLCISQHGLTLPLTALVAGFGLQEIALVVLIFVSIGGMAHRLSCKADMLCILLAIASYVWVPLTWLLCVFPCWLRWFSLHPLTILWLVFFLISVNIPSGILAVVLLVSLWLLGRYTNIAGLVTPYDIHHYTSGPRGVAALATAPDGTYLAAVRRAALTGRTMLFTPSQLGSLLEGAFRTQKPSLNTVNVVGSSMGSGGVFTIDGKIKCVTAAHVLTGNSARVSGVGFNQMLDFDVKGDFAIADCPNWQGVAPKAQFCEDGWTGRAYWLTSSGVEPGVIGNGFAFCFTACGDSGSPVITEAGELVGVHTGSNKQGGGIVTRPSGQFCNVKPIKLSELSEFFAGPKVPLGDVKIGSHIIKDTCEVPSDLCALLAAKPELEGGLSTVQLLCVFFLLWRMMGHAWTPLVAVGFFILNEILPAVLVRSVFSFGMFVLSWLTPWSAQVLMIRLLTAALNRNRWSLGFYSLGAVTSFVADLAVTQGHPLQVVMNLSTYAFLPRMMVVTSPVPVIACGVVHLLAIILYLFKYRCLHNVLVGDGVFSSAFFLRYFAEGKLREGVSQSCGMSHESLTGALAMRLTDEDLDFLTKWTDFKCFVSASNMRNAAGQFIEAAYAKALRIELAQLVQVDKVRGTMAKLEAFADTVAPQLSPGDIVVALGHTPVGSIFDLKVGSTKHTLQAIETRVLAGSKMTVARVVDPTPAPPPVPVPIPLPPKVLENGPNAWGDEDRLSKKKRRRMEAVGIFVMDGKKYQKFWDKNSGDVFYEEVHISTDEWECLRTGDPVDFDPETGIQCGHITIEDKVYNVFTSPSGRRFLVPANPENRRAQWEAAKLSVEQALGMMNVDGELTAKELEKLKRIIDKLQGLTKEQCLNCLLAASGLTRCGRGGLVVTETAVKIVKFHNRTFTLGPVNLKVASEVELKDAVEHNQHPVARPVDGGVVLLRSAVPSLIDVLISGADASPKLLARHGPGNTGIDGTLWDFEAEATKEEVALSAQIIQACDIRRGDAPEIGLPYKLYPVRGNPERVKGVLQNTRFGDIPYKTPSDTGSPVHAAACLTPNATPVTDGRSVLATTMPSGFELYVPTIPASVLDYLDSRPDCPKQLTEHGCEDAALRDLSKYDLSTQGFVLPGVLRLVRKYLFAHVGKCPPVHRPSTYPAKNSMAGINGNRFPTKDIQSVPEIDVLCAQAVRENWQTVTPCTLKKQYCGKKKTRTILGTNNFIALAHRAALSGVTQGFMKKAFNSPIALGKNKFKELQAPVLGRCLEADLASCDRSTPAIVRWFAANLLYELACAEEHLPSYVLNCCHDLLVTQSGAVTKRGGLSSGDPITSVSNTIYSLVIYAQHMVLSYFKSGHPHGLLFLQDQLKFEDMLKVQPLIVYSDDLVLYAESPSMPNYHWWVEHLNLMLGFQTDPKKTTITDSPSFLGCRIINGRQLVPNRDRILAALAYHMKASNVSEYYASAAAILMDSCACLEYDPEWFEELVVGIAQCARKDGYSFPGPPFFLSMWEKLRSNHEGKKSRMCGYCGAPAPYATACGLDVCVYHTHFHQHCPVIIWCGHPAGSGSCSECEPPLGKGTSPLDEVLEQVPYKPPRTVIMHVEQGLTPLDPGRYQTRRGLVSVRRGIRGNEVDLPDGDYASTALLPTCKEINMVAVASNVLRSRFIIGPPGAGKTHWLLQQVQDGDVIYTPTHQTMLDMIRALGTCRFNVPAGTTLQFPAPSRTGPWVRILAGGWCPGKNSFLDEAAYCNHLDVLRLLSKTTLTCLGDFKQLHPVGFDSHCYVFDIMPQTQLKTIWRFGQNICDAIQPDYRDKLMSMVNTTRVTYVEKPVRYGQVLTPYHRDREDGAITIDSSQGATFDVVTLHLPTKDSLNRQRALVAITRARHAIFVYDPHRQLQSMFDLPAKGTPVNLAVHRDEQLIVLDRNNREITVAQALGNGDKFRATDKRVVDSLRAICADLEGSSSPLPKVAHNLGFYFSPDLTQFAKLPVELAPHWPVVTTQNNERWPDRLVASLRPIHKYSRACIGAGYMVGPSVFLGTPGVVSYYLTKFVRGEAQVLPETVFSTGRIEVDCREYLDDREREVAESLPHAFIGDVKGTTVGGCHHVTSKYLPRFLPKESVAVVGVSSPGKAAKAVCTLTDVYLPDLEAYLHPETQSRCWKVMLDFKEVRLMVWKDKTAYFQLEGRHFTWYQLASYASYIRVPVNSTVYLDPCMGPALCNRRVVGSTHWGADLAVTPYDYGAKIILSSAYHGEMPPGYKILACAEFSLDDPVRYKHTWGFESDTAYLYEFTGNGEDWEDYNDAFRARQKGKIYKANATSMRFHFPPGPVIEPTLGLN.

The segment at Cys-8–Cys-28 adopts a C4-type; atypical zinc-finger fold. The segment at Glu-69 to Asp-182 is PCP1-alpha. Catalysis depends on for nsp1-alpha papain-like cysteine proteinase activity residues Cys-76 and His-146. The important for host EIF2AK2 inhibition stretch occupies residues Val-199–Ser-200. Active-site for nsp1-beta papain-like cysteine proteinase activity residues include Cys-270 and His-339. The OTU-like stretch occupies residues Leu-426 to Pro-513. One can recognise a Peptidase C33 domain in the interval Arg-428 to Val-536. Active-site for nsp2 cysteine proteinase activity residues include Cys-437 and His-506. 2 disordered regions span residues Arg-809–Pro-868 and Thr-1118–Val-1164. Residues Trp-810–Val-819 show a composition bias toward pro residues. Residues Pro-1139–Asp-1151 show a composition bias toward basic and acidic residues. 3 consecutive transmembrane segments (helical) span residues Ser-1221–Cys-1241, Gly-1266–Val-1286, and Trp-1339–Leu-1359. Residues Phe-1236–Leu-1359 form an HD1 region. Residues Thr-1414–Gln-1438 form a WCCH region. Transmembrane regions (helical) follow at residues Ile-1554–Thr-1574, Leu-1607–Leu-1627, Glu-1629–Cys-1649, Ala-1659–Leu-1679, and Phe-1695–Trp-1715. Residues Ile-1554–Trp-1715 form an HD2 region. Catalysis depends on charge relay system; for serine protease nsp4 activity residues His-1818, Asp-1843, and Ser-1897. The next 4 helical transmembrane spans lie at Trp-2006–Val-2026, Phe-2030–Ile-2050, Leu-2064–Gly-2084, and Ser-2107–Phe-2127. The segment at Trp-2006–Phe-2127 is HD3.

It belongs to the arteriviridae polyprotein family. As to quaternary structure, nsp1-alpha papain-like: Interacts with host RNF31. Interacts with host EIF2AK2; this interaction occurs in host stress granules and leads to EIF2AK2 inhibition. Interacts with host G3BP1; this interaction probably plays a role in Nsp1-beta-mediated inhibition of host EIF2AK2. In terms of assembly, interacts with host DDX18; this interaction redistributes host DDX18 to the cytoplasm. As to quaternary structure, interacts with host IFITM1. Interacts with host DDX5. In terms of assembly, interacts with host OTULIN. As to quaternary structure, interacts with host LGALS3. In terms of processing, specific enzymatic cleavages in vivo by its own proteases yield mature proteins. Nsp1 is autocleaved into two subunits, Nsp1-alpha and Nsp1-beta. There are two alternative pathways for processing. Either nsp4-5 is cleaved, which represents the major pathway or the nsp5-6 and nsp6-7 are processed, which represents the minor pathway. The major pathway occurs when nsp2 acts as a cofactor for nsp4.

The protein localises to the host nucleus. Its subcellular location is the host cytoplasm. It localises to the host membrane. The protein resides in the host endoplasmic reticulum. It is found in the host perinuclear region. The catalysed reaction is RNA(n) + a ribonucleoside 5'-triphosphate = RNA(n+1) + diphosphate. The enzyme catalyses ATP + H2O = ADP + phosphate + H(+). It carries out the reaction Thiol-dependent hydrolysis of ester, thioester, amide, peptide and isopeptide bonds formed by the C-terminal Gly of ubiquitin (a 76-residue protein attached to proteins as an intracellular targeting signal).. It catalyses the reaction uridylyl-uridylyl-ribonucleotide-RNA = a 3'-end uridylyl-2',3'-cyclophospho-uridine-RNA + a 5'-end dephospho-ribonucleoside-RNA. Contains the activities necessary for the transcription of negative stranded RNA, leader RNA, subgenomic mRNAs and progeny virion RNA as well as proteinases responsible for the cleavage of the polyprotein into functional products. In terms of biological role, inhibits host IFN-beta production. Plays a role in the degradation of the host transcriptional activator CREBBP protein. The degradation of host CREBBP which is a key component of the IFN enhanceosome is likely responsible for the inhibition of interferon mediated by Nsp1-alpha. Also participates in the inhibition of host NF-kappa-B activation by counteracting LUBAC-dependent induction of NF-kappa-B. Reduces host NEMO ubiquitination by blocking the interaction between the two LUBAC complex components RNF31 and SHARPIN. Functionally, plays a role in blocking host mRNA nuclear export to the cytoplasm and subversion of host protein synthesis. Additionally, inhibits the interferon-activated JAK/STAT signal transduction by mediating the ubiquitination and subsequent proteasomal degradation of host KPNA1. Repurposes the host antiviral stress granules into a proviral platform to counteract the EIF2AK2/PKR restriction, thereby regulating the host inflammatory response. Its function is as follows. Multifunctional protein that acts as a viral protease and as a viral antagonist of host immune response. Cleaves the nsp2/nsp3 site in the viral polyprotein. Displays deubiquitinating activity that cleaves both ubiquitinated and ISGylated products and therefore inhibits ubiquitin and ISG15-dependent host innate immunity. Also deubiquinates host NFKBIA, thereby interfering with NFKBIA degradation and impairing subsequent NF-kappa-B activation. Plays a role in the inhibition of the immune response by interacting with host IFITM1. This interaction leads to the proteasomal degradation of the IFN-induced antiviral protein IFITM1. In terms of biological role, cleaves the majority of cleavage sites present in the C-terminus of the polyprotein. Triggers host apoptosis through caspase-3, -8, and -9 activations. Subverts host innate immune responses through its protease activity. Targets the NF-kappa-B essential modulator NEMO and mediates its cleavage. Blocks host interferon beta induction and downstream signaling by cleaving mitochondrial MAVS, dislodging it from the mitochondria. Impairs host defense by cleaving host mRNA-decapping enzyme DCP1A to attenuate its antiviral activity. Functionally, plays a role in the initial induction of autophagosomes from host endoplasmic reticulum. Its function is as follows. Plays a role in the inhibition of host STAT3 signaling pathway by inducing the degradation of STAT3. Responsible for replication and transcription of the viral RNA genome. In terms of biological role, displays RNA and DNA duplex-unwinding activities with 5' to 3' polarity. Functionally, plays a role in viral transcription/replication and prevents the simultaneous activation of host cell dsRNA sensors, such as MDA5/IFIH1, OAS, PKR and NLRP3 inflammasome. Acts by degrading the 5'-polyuridines generated during replication of the poly(A) region of viral genomic and subgenomic RNAs. Catalyzes a two-step reaction in which a 2'3'-cyclic phosphate (2'3'-cP) is first generated by 2'-O transesterification, which is then hydrolyzed to a 3'-phosphate (3'-P). If not degraded, poly(U) RNA would hybridize with poly(A) RNA tails and activate host dsRNA sensors. Also plays a role in the inhibition of host type I interferon production by recruiting host OTULIN to promote removal of linear ubiquitination targeting host NEMO. The chain is Replicase polyprotein 1ab from Porcine reproductive and respiratory syndrome virus (PRRSV).